Consider the following 1221-residue polypeptide: MAEAHKYKKLTPIEHVLTRPEMYIGSLDTTATPMFIYDEQKGHMVWETVKLNHGLLKIVDEILLNASDNISNRSARMTYIRVTITDTGEITIENDGAGIPIVRSREHKLYIPEMVFGHLLTSSNYDDDNQNAVAGRHGYGAKLTNILSLSFSVCCRTNGREFHMSWQDHMRKATAPRVSNVGTKEKNVTRVKFLPDYERFGMKEKKISNDMKRVLYKRIMDLSAMFPNIQITLNGSSFGFKSFKDYATLYSAMTPKGEKPPPPYVYESKSGCVAFIPSVVPGVRRMFGVVNGVVTYNGGTHCNAAQDILTGCLDGVERELKKENKVMDTNRVLRHFTILVFLVQVQPKFDSQNKARLVSTPTMPRVPRQDVMKYLLRMPFLEAHVSTITGQLAQELNKEIGTGRRMSSKTLLTSITKLVDATSTRRDPKHTRTLIVTEGDSAKALAQNSLSSDQKRYTGVFPLRGKLLNVRNKNLKRLRNCKELQELFCALGLELDKDYTDADELRYQRILIMTDQDADGSHIKGLVINAFESLWPSLLVRNPGFISIFSTPIVKARLRDKSVVSFFSMKEFHKWQRSNANTPYTCKYYKGLGTSTTAEGKEYFKDMEKHTMRLLVDRSDHKLLDNVFDSQEVEWRKDWMTKANAFTGEVDIDRSKKMLTVTDFVHKEMVHFALVGNARALAHSVDGLKPSQRKIIWALMRRSGNEAAKVAQLSGYISEASAFHHGETSLQETMIKMAQSFTGGNNVNLLVPEGQFGSRQQLGNDHAAPRYIFTKLSKVARLLFPSEDDPLLDYIVEEGQQVEPNHYVPILPLLLCNGSVGIGFGFSSNIPPFHRLDVSAAVRAMISGERAKSVVRRLVPWAVGFQGEIRRGPEGEFIAVGTYTYCKGGRVHVTELPWTCSVEAFREHISYLATKDIVNRIADYSGANHVDIDVEVAQGAVNTYAECESELGLTQRIHINGTVFSPNGTLSPLESDLTPVLQWHYDRRLDLYKKRRQRNLTLLEQELAREKSTLKFVQHFGAGHIDFANATEATLEKVCSKLGLVRVDDSFDYILRKPITFYTKTSFENLLKKIAETERRIEALKKTTPVQLWLGELDQFDRFFQDHEKKMVEAILKERRQRSPPSDLLPGLQQPRLEVEEAKGGKKFEMRVQVRKYVPPPTKRGAGGRSDGDGGATAAGAAAAVGGRGEKKGPGRAGGVRRMVLDALAKRVTRLLPRLLF.

ATP-binding positions include Asn-65, Asn-94, Ser-122–Asn-124, Gly-135–Lys-142, and Gln-352–Lys-354. Positions Arg-432–Ile-546 constitute a Toprim domain. Positions 438, 515, and 517 each coordinate Mg(2+). A Topo IIA-type catalytic domain is found at Leu-681 to Leu-1097. Residue Tyr-771 is the O-(5'-phospho-DNA)-tyrosine intermediate of the active site. An interaction with DNA region spans residues Gly-952–Gly-961. The disordered stretch occupies residues Val-1158–Gly-1198. Residues Gly-1165 to Thr-1177 are compositionally biased toward gly residues.

This sequence belongs to the type II topoisomerase family. In terms of assembly, homodimer. Requires Mg(2+) as cofactor. The cofactor is Mn(2+). Ca(2+) is required as a cofactor.

It is found in the nucleus. It carries out the reaction ATP-dependent breakage, passage and rejoining of double-stranded DNA.. Its function is as follows. Control of topological states of DNA by transient breakage and subsequent rejoining of DNA strands. Topoisomerase II makes double-strand breaks. The chain is DNA topoisomerase 2 (TOP2) from Trypanosoma brucei brucei.